Here is a 223-residue protein sequence, read N- to C-terminus: Probable GTP-binding protein EngB (223 aa).

The 175-residue stretch at 49–223 (MGVEIAFAGR…LRAALAGLTD (175 aa)) folds into the EngB-type G domain. GTP is bound by residues 57–64 (GRSNVGKS), 84–88 (GRTKQ), 102–105 (DMPG), 169–172 (TKAD), and 203–205 (TSS). 2 residues coordinate Mg(2+): Ser64 and Thr86.

The protein belongs to the TRAFAC class TrmE-Era-EngA-EngB-Septin-like GTPase superfamily. EngB GTPase family. It depends on Mg(2+) as a cofactor.

Functionally, necessary for normal cell division and for the maintenance of normal septation. The sequence is that of Probable GTP-binding protein EngB from Granulibacter bethesdensis (strain ATCC BAA-1260 / CGDNIH1).